Reading from the N-terminus, the 130-residue chain is Large ribosomal subunit protein bL20c (130 aa).

Belongs to the bacterial ribosomal protein bL20 family.

Its subcellular location is the plastid. It is found in the chloroplast. Its function is as follows. Binds directly to 23S ribosomal RNA and is necessary for the in vitro assembly process of the 50S ribosomal subunit. It is not involved in the protein synthesizing functions of that subunit. The polypeptide is Large ribosomal subunit protein bL20c (Oenothera argillicola (Appalachian evening primrose)).